The chain runs to 209 residues: Uracil phosphoribosyltransferase (209 aa).

Residues arginine 79, arginine 104, and 131 to 139 (DPMLATGNS) each bind 5-phospho-alpha-D-ribose 1-diphosphate. Uracil is bound by residues isoleucine 194 and 199-201 (GDA). Residue aspartate 200 coordinates 5-phospho-alpha-D-ribose 1-diphosphate.

The protein belongs to the UPRTase family. It depends on Mg(2+) as a cofactor.

It carries out the reaction UMP + diphosphate = 5-phospho-alpha-D-ribose 1-diphosphate + uracil. It functions in the pathway pyrimidine metabolism; UMP biosynthesis via salvage pathway; UMP from uracil: step 1/1. With respect to regulation, allosterically activated by GTP. Its function is as follows. Catalyzes the conversion of uracil and 5-phospho-alpha-D-ribose 1-diphosphate (PRPP) to UMP and diphosphate. In Polaromonas naphthalenivorans (strain CJ2), this protein is Uracil phosphoribosyltransferase.